A 391-amino-acid polypeptide reads, in one-letter code: Cystathionine beta-lyase MetC (391 aa).

Residue Lys-196 is modified to N6-(pyridoxal phosphate)lysine.

It belongs to the trans-sulfuration enzymes family. As to quaternary structure, homotetramer. It depends on pyridoxal 5'-phosphate as a cofactor.

The enzyme catalyses L,L-cystathionine + H2O = L-homocysteine + pyruvate + NH4(+). The catalysed reaction is an S-substituted L-cysteine + H2O = a thiol + pyruvate + NH4(+). It participates in amino-acid biosynthesis; L-methionine biosynthesis via de novo pathway; L-homocysteine from L-cystathionine: step 1/1. With respect to regulation, cystathionine beta-lyase activity is inhibited by sweat components such as glycine, serine and ammonium sulfate. Inhibited by cystathionine at a concentration higher than 6 mM. In terms of biological role, catalyzes the transformation of cystathionine into homocysteine. Can also catalyze, at low levels, the conversion of cystathionine into methionine and the conversion of methionine into methanethiol. This chain is Cystathionine beta-lyase MetC, found in Staphylococcus haemolyticus (strain JCSC1435).